A 541-amino-acid chain; its full sequence is Membrane protein insertase YidC (541 aa).

The chain crosses the membrane as a helical span at residues 7 to 27; that stretch reads ILLLALALVSFLLFQQWQVET. Polar residues predominate over residues 34–55; that stretch reads TVSTVQQTHKNGDVPTSSTANS. Residues 34–59 form a disordered region; sequence TVSTVQQTHKNGDVPTSSTANSDAPV. The next 4 helical transmembrane spans lie at 343–363, 418–438, 456–476, and 495–515; these read SFIQSIVGNWGLAIMILTFIV, LGGCLPIVLQMPIFISLYWAL, LSAQDPYYILPLLMGASMFLI, and FIPVMFTVFFLWFPAGLVLYW.

It belongs to the OXA1/ALB3/YidC family. Type 1 subfamily. Interacts with the Sec translocase complex via SecD. Specifically interacts with transmembrane segments of nascent integral membrane proteins during membrane integration.

Its subcellular location is the cell inner membrane. Required for the insertion and/or proper folding and/or complex formation of integral membrane proteins into the membrane. Involved in integration of membrane proteins that insert both dependently and independently of the Sec translocase complex, as well as at least some lipoproteins. Aids folding of multispanning membrane proteins. The protein is Membrane protein insertase YidC of Aliivibrio salmonicida (strain LFI1238) (Vibrio salmonicida (strain LFI1238)).